Here is a 522-residue protein sequence, read N- to C-terminus: 2-isopropylmalate synthase (522 aa).

The 263-residue stretch at 5–267 folds into the Pyruvate carboxyltransferase domain; it reads VIIFDTTLRD…YTNINAREIH (263 aa). Residues D14, H202, H204, and N238 each coordinate Mn(2+). A regulatory domain region spans residues 392–522; sequence VMEQLVVQSD…MQQTRELGGV (131 aa).

This sequence belongs to the alpha-IPM synthase/homocitrate synthase family. LeuA type 1 subfamily. In terms of assembly, homodimer. The cofactor is Mn(2+).

It is found in the cytoplasm. The catalysed reaction is 3-methyl-2-oxobutanoate + acetyl-CoA + H2O = (2S)-2-isopropylmalate + CoA + H(+). It participates in amino-acid biosynthesis; L-leucine biosynthesis; L-leucine from 3-methyl-2-oxobutanoate: step 1/4. In terms of biological role, catalyzes the condensation of the acetyl group of acetyl-CoA with 3-methyl-2-oxobutanoate (2-ketoisovalerate) to form 3-carboxy-3-hydroxy-4-methylpentanoate (2-isopropylmalate). This Shewanella amazonensis (strain ATCC BAA-1098 / SB2B) protein is 2-isopropylmalate synthase.